Consider the following 460-residue polypeptide: Methionine aminopeptidase 2-1 (460 aa).

The interval 1–90 (MGSKSPNGED…SAQAAQQTAP (90 aa)) is disordered. The span at 30–39 (SAAASGLLRG) shows a compositional bias: low complexity. Over residues 42-52 (EDQDEDGDDDE) the composition is skewed to acidic residues. The segment covering 69–81 (TKKRRRNNKKKKS) has biased composition (basic residues). Residue H212 participates in substrate binding. Positions 233, 244, and 313 each coordinate a divalent metal cation. Residue H321 coordinates substrate. A divalent metal cation contacts are provided by E346 and E441.

It belongs to the peptidase M24A family. Methionine aminopeptidase eukaryotic type 2 subfamily. Co(2+) is required as a cofactor. Requires Zn(2+) as cofactor. It depends on Mn(2+) as a cofactor. The cofactor is Fe(2+).

The protein resides in the cytoplasm. The catalysed reaction is Release of N-terminal amino acids, preferentially methionine, from peptides and arylamides.. Its function is as follows. Cotranslationally removes the N-terminal methionine from nascent proteins. The N-terminal methionine is often cleaved when the second residue in the primary sequence is small and uncharged (Met-Ala-, Cys, Gly, Pro, Ser, Thr, or Val). This is Methionine aminopeptidase 2-1 from Leptosphaeria maculans (strain JN3 / isolate v23.1.3 / race Av1-4-5-6-7-8) (Blackleg fungus).